A 259-amino-acid chain; its full sequence is Peroxiredoxin-4 (259 aa).

One can recognise a Thioredoxin domain in the interval 66–224 (IRIRKPAPAF…AIRTLKALKF (159 aa)). Cys111 (cysteine sulfenic acid (-SOH) intermediate) is an active-site residue.

Belongs to the peroxiredoxin family. AhpC/Prx1 subfamily. In terms of assembly, homodimer; disulfide-linked, upon oxidation. 5 homodimers assemble to form a ring-like decamer.

Its subcellular location is the cytoplasm. The protein resides in the endoplasmic reticulum. It carries out the reaction a hydroperoxide + [thioredoxin]-dithiol = an alcohol + [thioredoxin]-disulfide + H2O. Functionally, thiol-specific peroxidase that catalyzes the reduction of hydrogen peroxide and organic hydroperoxides to water and alcohols, respectively. Plays a role in cell protection against oxidative stress by detoxifying peroxides and as sensor of hydrogen peroxide-mediated signaling events. Regulates the activation of NF-kappa-B in the cytosol by a modulation of I-kappa-B-alpha phosphorylation. The sequence is that of Peroxiredoxin-4 (prdx4) from Dictyostelium discoideum (Social amoeba).